The following is a 220-amino-acid chain: Deoxyribose-phosphate aldolase 2 (220 aa).

Catalysis depends on D89, which acts as the Proton donor/acceptor. Residue K151 is the Schiff-base intermediate with acetaldehyde of the active site. The Proton donor/acceptor role is filled by K180.

This sequence belongs to the DeoC/FbaB aldolase family. DeoC type 1 subfamily.

It localises to the cytoplasm. It catalyses the reaction 2-deoxy-D-ribose 5-phosphate = D-glyceraldehyde 3-phosphate + acetaldehyde. The protein operates within carbohydrate degradation; 2-deoxy-D-ribose 1-phosphate degradation; D-glyceraldehyde 3-phosphate and acetaldehyde from 2-deoxy-alpha-D-ribose 1-phosphate: step 2/2. Catalyzes a reversible aldol reaction between acetaldehyde and D-glyceraldehyde 3-phosphate to generate 2-deoxy-D-ribose 5-phosphate. The chain is Deoxyribose-phosphate aldolase 2 from Staphylococcus aureus (strain MRSA252).